Here is a 424-residue protein sequence, read N- to C-terminus: Serine hydroxymethyltransferase (424 aa).

(6S)-5,6,7,8-tetrahydrofolate contacts are provided by residues leucine 119 and glycine 123–leucine 125. Lysine 228 carries the post-translational modification N6-(pyridoxal phosphate)lysine. A (6S)-5,6,7,8-tetrahydrofolate-binding site is contributed by serine 353 to phenylalanine 355.

Belongs to the SHMT family. In terms of assembly, homodimer. Pyridoxal 5'-phosphate is required as a cofactor.

The protein localises to the cytoplasm. It carries out the reaction (6R)-5,10-methylene-5,6,7,8-tetrahydrofolate + glycine + H2O = (6S)-5,6,7,8-tetrahydrofolate + L-serine. The protein operates within one-carbon metabolism; tetrahydrofolate interconversion. It functions in the pathway amino-acid biosynthesis; glycine biosynthesis; glycine from L-serine: step 1/1. Its function is as follows. Catalyzes the reversible interconversion of serine and glycine with tetrahydrofolate (THF) serving as the one-carbon carrier. Also exhibits THF-independent aldolase activity toward beta-hydroxyamino acids, producing glycine and aldehydes, via a retro-aldol mechanism. This chain is Serine hydroxymethyltransferase, found in Natronomonas pharaonis (strain ATCC 35678 / DSM 2160 / CIP 103997 / JCM 8858 / NBRC 14720 / NCIMB 2260 / Gabara) (Halobacterium pharaonis).